Consider the following 293-residue polypeptide: 4-hydroxy-tetrahydrodipicolinate synthase (293 aa).

Threonine 47 provides a ligand contact to pyruvate. Tyrosine 136 functions as the Proton donor/acceptor in the catalytic mechanism. The active-site Schiff-base intermediate with substrate is lysine 164. Pyruvate is bound at residue isoleucine 206.

The protein belongs to the DapA family. As to quaternary structure, homotetramer; dimer of dimers.

The protein resides in the cytoplasm. The enzyme catalyses L-aspartate 4-semialdehyde + pyruvate = (2S,4S)-4-hydroxy-2,3,4,5-tetrahydrodipicolinate + H2O + H(+). The protein operates within amino-acid biosynthesis; L-lysine biosynthesis via DAP pathway; (S)-tetrahydrodipicolinate from L-aspartate: step 3/4. Catalyzes the condensation of (S)-aspartate-beta-semialdehyde [(S)-ASA] and pyruvate to 4-hydroxy-tetrahydrodipicolinate (HTPA). In Listeria welshimeri serovar 6b (strain ATCC 35897 / DSM 20650 / CCUG 15529 / CIP 8149 / NCTC 11857 / SLCC 5334 / V8), this protein is 4-hydroxy-tetrahydrodipicolinate synthase.